Consider the following 181-residue polypeptide: Cytochrome c-type biogenesis protein CcmE (181 aa).

The Cytoplasmic portion of the chain corresponds to 1–8 (MNPRRKSR). Residues 9 to 29 (LKVVVSIIFGVAVAAGLTLYA) traverse the membrane as a helical; Signal-anchor for type II membrane protein segment. Over 30–181 (LSQNIDLFYT…TLKTLQGEAN (152 aa)) the chain is Periplasmic. Heme contacts are provided by H131 and Y135. 2 stretches are compositionally biased toward basic and acidic residues: residues 135 to 148 (YMPP…KEQH) and 156 to 166 (ADLKGTSARDK). Residues 135–166 (YMPPELGDKLKEQHGAAGISEADLKGTSARDK) form a disordered region.

It belongs to the CcmE/CycJ family.

It is found in the cell inner membrane. In terms of biological role, heme chaperone required for the biogenesis of c-type cytochromes. Transiently binds heme delivered by CcmC and transfers the heme to apo-cytochromes in a process facilitated by CcmF and CcmH. The sequence is that of Cytochrome c-type biogenesis protein CcmE from Actinobacillus pleuropneumoniae serotype 7 (strain AP76).